The sequence spans 95 residues: Small ribosomal subunit protein uS19 (95 aa).

This sequence belongs to the universal ribosomal protein uS19 family.

Functionally, protein S19 forms a complex with S13 that binds strongly to the 16S ribosomal RNA. This is Small ribosomal subunit protein uS19 from Thermotoga sp. (strain RQ2).